The sequence spans 345 residues: Aspartate--ammonia ligase (345 aa).

This sequence belongs to the class-II aminoacyl-tRNA synthetase family. AsnA subfamily.

The protein localises to the cytoplasm. The enzyme catalyses L-aspartate + NH4(+) + ATP = L-asparagine + AMP + diphosphate + H(+). The protein operates within amino-acid biosynthesis; L-asparagine biosynthesis; L-asparagine from L-aspartate (ammonia route): step 1/1. In Bacteroides thetaiotaomicron (strain ATCC 29148 / DSM 2079 / JCM 5827 / CCUG 10774 / NCTC 10582 / VPI-5482 / E50), this protein is Aspartate--ammonia ligase.